A 570-amino-acid chain; its full sequence is Formate--tetrahydrofolate ligase (570 aa).

65 to 72 contributes to the ATP binding site; the sequence is TPHGEGKT.

Belongs to the formate--tetrahydrofolate ligase family.

The catalysed reaction is (6S)-5,6,7,8-tetrahydrofolate + formate + ATP = (6R)-10-formyltetrahydrofolate + ADP + phosphate. Its pathway is one-carbon metabolism; tetrahydrofolate interconversion. The chain is Formate--tetrahydrofolate ligase from Shewanella sp. (strain ANA-3).